The following is a 297-amino-acid chain: Heme A synthase (297 aa).

Residues 1 to 6 (MHKRLK) lie on the Cytoplasmic side of the membrane. A helical transmembrane segment spans residues 7–27 (IYSVITSIGVLIVLLQGALVT). Residues 28 to 62 (KTGSGEGCGATWPLCFGEVIPTNPAIETIIEYSHR) are Extracellular-facing. Cys35 and Cys42 are joined by a disulfide. Glu58 is an active-site residue. His61 lines the heme o pocket. The helical transmembrane segment at 63 to 83 (IVSGLVGAMIIILAIWAWKQL) threads the bilayer. Over 84-93 (KHMREAKALS) the chain is Cytoplasmic. A helical membrane pass occupies residues 94-114 (FAAVILIIFQGLLGAGAVVFG). The Extracellular segment spans residues 115–118 (QSKA). The chain crosses the membrane as a helical span at residues 119 to 139 (ILALHFGISAMSLAAVVLLTI). His123 lines the heme o pocket. At 140–156 (LAFEDGREHTMAPKVSR) the chain is on the cytoplasmic side. The helical transmembrane segment at 157-177 (GFKYYVFFVITYCYAVIYSGA) threads the bilayer. Over 178 to 210 (YVKHSEATLACAGFPLCNGQIFPGLYGPVGAHY) the chain is Extracellular. An intrachain disulfide couples Cys188 to Cys194. The helical transmembrane segment at 211 to 231 (FHRVVGTILLLFLLILMIWTL) threads the bilayer. Heme b is bound at residue His212. Residues 232–242 (SRYRHYRVLTW) are Cytoplasmic-facing. Residues 243 to 263 (TAVLSFLLVVGQFISGISIVF) traverse the membrane as a helical segment. The Extracellular segment spans residues 264–271 (TQNALSVG). Residues 272 to 292 (LIHALIISILFSALSYMTMII) traverse the membrane as a helical segment. Residue His274 participates in heme b binding. The Cytoplasmic portion of the chain corresponds to 293–297 (TRPSH).

Belongs to the COX15/CtaA family. Type 1 subfamily. Interacts with CtaB. The cofactor is heme b.

Its subcellular location is the cell membrane. The catalysed reaction is Fe(II)-heme o + 2 A + H2O = Fe(II)-heme a + 2 AH2. It participates in porphyrin-containing compound metabolism; heme A biosynthesis; heme A from heme O: step 1/1. In terms of biological role, catalyzes the conversion of heme O to heme A by two successive hydroxylations of the methyl group at C8. The first hydroxylation forms heme I, the second hydroxylation results in an unstable dihydroxymethyl group, which spontaneously dehydrates, resulting in the formyl group of heme A. The polypeptide is Heme A synthase (Alkalihalophilus pseudofirmus (strain ATCC BAA-2126 / JCM 17055 / OF4) (Bacillus pseudofirmus)).